The sequence spans 112 residues: MKTLFTSVVLCGALVVSSSFAEEKATXQTAQSVVTTQAEAQVAPAVVSDKLNINTATASEIQKSLTGIGAKKAEAIVQYREKHGNFXNAEQLLEVQGIGKATLEKNRDRIIF.

An N-terminal signal peptide occupies residues methionine 1–alanine 21. HhH domains are found at residues aspartate 49 to tyrosine 79 and arginine 80 to arginine 109.

This is an uncharacterized protein from Haemophilus influenzae (strain ATCC 51907 / DSM 11121 / KW20 / Rd).